We begin with the raw amino-acid sequence, 33 residues long: uncharacterized protein (33 aa).

The segment at 1-33 (MGSVIKKRRKRMSKKKHRKLLRRTRVQRRKLGK) is disordered.

This is an uncharacterized protein from Mycobacterium tuberculosis (strain CDC 1551 / Oshkosh).